The following is a 417-amino-acid chain: Serine hydroxymethyltransferase 2 (417 aa).

(6S)-5,6,7,8-tetrahydrofolate-binding positions include Leu-121 and 125 to 127 (GHL). Position 229 is an N6-(pyridoxal phosphate)lysine (Lys-229). 354–356 (SPF) contributes to the (6S)-5,6,7,8-tetrahydrofolate binding site.

It belongs to the SHMT family. Homodimer. Pyridoxal 5'-phosphate serves as cofactor.

Its subcellular location is the cytoplasm. The catalysed reaction is (6R)-5,10-methylene-5,6,7,8-tetrahydrofolate + glycine + H2O = (6S)-5,6,7,8-tetrahydrofolate + L-serine. Its pathway is one-carbon metabolism; tetrahydrofolate interconversion. The protein operates within amino-acid biosynthesis; glycine biosynthesis; glycine from L-serine: step 1/1. Functionally, catalyzes the reversible interconversion of serine and glycine with tetrahydrofolate (THF) serving as the one-carbon carrier. This reaction serves as the major source of one-carbon groups required for the biosynthesis of purines, thymidylate, methionine, and other important biomolecules. Also exhibits THF-independent aldolase activity toward beta-hydroxyamino acids, producing glycine and aldehydes, via a retro-aldol mechanism. This Pseudomonas putida (strain ATCC 47054 / DSM 6125 / CFBP 8728 / NCIMB 11950 / KT2440) protein is Serine hydroxymethyltransferase 2.